We begin with the raw amino-acid sequence, 261 residues long: Cytochrome c oxidase subunit 3 (261 aa).

Residues 1 to 15 lie on the Mitochondrial matrix side of the membrane; the sequence is MTHQTHAYHMVNPSP. The helical transmembrane segment at 16 to 34 threads the bilayer; it reads WPLTGALSALLMTSGLAMW. Residues 35–40 lie on the Mitochondrial intermembrane side of the membrane; it reads FHFNST. The helical transmembrane segment at 41–66 threads the bilayer; that stretch reads ILLMIGLTTNTLTMYQWWRDVIREST. Topologically, residues 67–72 are mitochondrial matrix; sequence FQGHHT. Residues 73 to 105 traverse the membrane as a helical segment; that stretch reads PTVQKGLRYGMILFIISEVLFFTGFFWAFYHSS. Residues 106–128 lie on the Mitochondrial intermembrane side of the membrane; that stretch reads LAPTPELGGCWPPTGIHPLNPLE. The helical transmembrane segment at 129-152 threads the bilayer; it reads VPLLNTSVLLASGVSITWAHHSLM. Residues 153–155 are Mitochondrial matrix-facing; that stretch reads EGN. A helical membrane pass occupies residues 156-183; it reads RYPMLQALFITIALGVYFTLLQASEYYE. Residues 184-190 lie on the Mitochondrial intermembrane side of the membrane; it reads APFTISD. A helical membrane pass occupies residues 191 to 223; the sequence is GIYGSTFFVATGFHGLHVIIGSTFLIVCFFRQL. Residues 224 to 232 are Mitochondrial matrix-facing; sequence KFHFTSNHH. The chain crosses the membrane as a helical span at residues 233 to 256; that stretch reads FGFEAAAWYWHFVDVVWLFLYVSI. Topologically, residues 257-261 are mitochondrial intermembrane; it reads YWWGS.

The protein belongs to the cytochrome c oxidase subunit 3 family. As to quaternary structure, component of the cytochrome c oxidase (complex IV, CIV), a multisubunit enzyme composed of 14 subunits. The complex is composed of a catalytic core of 3 subunits MT-CO1, MT-CO2 and MT-CO3, encoded in the mitochondrial DNA, and 11 supernumerary subunits COX4I, COX5A, COX5B, COX6A, COX6B, COX6C, COX7A, COX7B, COX7C, COX8 and NDUFA4, which are encoded in the nuclear genome. The complex exists as a monomer or a dimer and forms supercomplexes (SCs) in the inner mitochondrial membrane with NADH-ubiquinone oxidoreductase (complex I, CI) and ubiquinol-cytochrome c oxidoreductase (cytochrome b-c1 complex, complex III, CIII), resulting in different assemblies (supercomplex SCI(1)III(2)IV(1) and megacomplex MCI(2)III(2)IV(2)).

It localises to the mitochondrion inner membrane. It carries out the reaction 4 Fe(II)-[cytochrome c] + O2 + 8 H(+)(in) = 4 Fe(III)-[cytochrome c] + 2 H2O + 4 H(+)(out). Its function is as follows. Component of the cytochrome c oxidase, the last enzyme in the mitochondrial electron transport chain which drives oxidative phosphorylation. The respiratory chain contains 3 multisubunit complexes succinate dehydrogenase (complex II, CII), ubiquinol-cytochrome c oxidoreductase (cytochrome b-c1 complex, complex III, CIII) and cytochrome c oxidase (complex IV, CIV), that cooperate to transfer electrons derived from NADH and succinate to molecular oxygen, creating an electrochemical gradient over the inner membrane that drives transmembrane transport and the ATP synthase. Cytochrome c oxidase is the component of the respiratory chain that catalyzes the reduction of oxygen to water. Electrons originating from reduced cytochrome c in the intermembrane space (IMS) are transferred via the dinuclear copper A center (CU(A)) of subunit 2 and heme A of subunit 1 to the active site in subunit 1, a binuclear center (BNC) formed by heme A3 and copper B (CU(B)). The BNC reduces molecular oxygen to 2 water molecules using 4 electrons from cytochrome c in the IMS and 4 protons from the mitochondrial matrix. This Raphicerus melanotis (Cape grysbok) protein is Cytochrome c oxidase subunit 3 (MT-CO3).